Consider the following 466-residue polypeptide: 3-isopropylmalate dehydratase large subunit (466 aa).

Positions 347, 407, and 410 each coordinate [4Fe-4S] cluster.

This sequence belongs to the aconitase/IPM isomerase family. LeuC type 1 subfamily. Heterodimer of LeuC and LeuD. The cofactor is [4Fe-4S] cluster.

It carries out the reaction (2R,3S)-3-isopropylmalate = (2S)-2-isopropylmalate. The protein operates within amino-acid biosynthesis; L-leucine biosynthesis; L-leucine from 3-methyl-2-oxobutanoate: step 2/4. Functionally, catalyzes the isomerization between 2-isopropylmalate and 3-isopropylmalate, via the formation of 2-isopropylmaleate. This chain is 3-isopropylmalate dehydratase large subunit, found in Shewanella loihica (strain ATCC BAA-1088 / PV-4).